The following is a 255-amino-acid chain: Small ribosomal subunit protein eS1 (255 aa).

An N-acetylalanine; partial modification is found at alanine 2.

The protein belongs to the eukaryotic ribosomal protein eS1 family. As to quaternary structure, component of the small ribosomal subunit. Mature ribosomes consist of a small (40S) and a large (60S) subunit. The 40S subunit contains about 33 different proteins and 1 molecule of RNA (18S). The 60S subunit contains about 49 different proteins and 3 molecules of RNA (25S, 5.8S and 5S).

The protein resides in the cytoplasm. This chain is Small ribosomal subunit protein eS1 (rps1), found in Pyrenophora tritici-repentis (strain Pt-1C-BFP) (Wheat tan spot fungus).